The chain runs to 281 residues: 2-dehydro-3-deoxyphosphooctonate aldolase (281 aa).

The protein belongs to the KdsA family.

Its subcellular location is the cytoplasm. It carries out the reaction D-arabinose 5-phosphate + phosphoenolpyruvate + H2O = 3-deoxy-alpha-D-manno-2-octulosonate-8-phosphate + phosphate. It participates in carbohydrate biosynthesis; 3-deoxy-D-manno-octulosonate biosynthesis; 3-deoxy-D-manno-octulosonate from D-ribulose 5-phosphate: step 2/3. The protein operates within bacterial outer membrane biogenesis; lipopolysaccharide biosynthesis. The chain is 2-dehydro-3-deoxyphosphooctonate aldolase from Pseudomonas syringae pv. tomato (strain ATCC BAA-871 / DC3000).